The chain runs to 875 residues: GATOR2 complex protein MIOS (875 aa).

6 WD repeats span residues 61–100 (PYMK…NSKF), 111–155 (KHAR…TPDI), 182–221 (GQND…QKMF), 223–261 (NTKA…KPVL), 265–306 (EQPK…TPIG), and 395–437 (RLRA…KQYT). A C4-type zinc finger spans residues 735–781 (VSCNFCGKSISYSCSAVPHQGRGFSQYGVSGSPTKSKVTSCPGCRKP). Zn(2+) contacts are provided by Cys737 and Cys740. A phosphoserine mark is found at Ser759 and Ser766. Zn(2+) contacts are provided by Cys775, Cys778, Cys788, Cys827, Cys830, His832, His835, His838, Cys849, Cys854, and Cys858. The segment at 782-863 (LPRCALCLIN…CTCKCMQLDT (82 aa)) adopts an RING-type; atypical zinc-finger fold.

This sequence belongs to the WD repeat mio family. As to quaternary structure, component of the GATOR2 subcomplex, composed of MIOS, SEC13, SEH1L, WDR24 and WDR59. The GATOR2 complex interacts with CASTOR1 and CASTOR2; the interaction is negatively regulated by arginine. CASTOR1 and CASTOR2 convey leucine availability via direct interaction with MIOS. The GATOR2 complex interacts with SESN1, SESN2 and SESN3; the interaction is negatively regulated by amino acids. Interacts with SAR1A and SAR1B; the interaction is direct, disrupted by leucine and mediates the interaction of SAR1A or SAR1B with the GATOR2 complex to negatively regulate the TORC1 signaling upon leucine deprivation.

It is found in the lysosome membrane. The GATOR2 complex is negatively regulated by the upstream amino acid sensors CASTOR1 and SESN2, which sequester the GATOR2 complex in absence of amino acids. In the presence of abundant amino acids, GATOR2 is released from CASTOR1 and SESN2 and activated. In terms of biological role, as a component of the GATOR2 complex, functions as an activator of the amino acid-sensing branch of the mTORC1 signaling pathway. The GATOR2 complex indirectly activates mTORC1 through the inhibition of the GATOR1 subcomplex. GATOR2 probably acts as an E3 ubiquitin-protein ligase toward GATOR1. In the presence of abundant amino acids, the GATOR2 complex mediates ubiquitination of the NPRL2 core component of the GATOR1 complex, leading to GATOR1 inactivation. In the absence of amino acids, GATOR2 is inhibited, activating the GATOR1 complex. Within the GATOR2 complex, MIOS is required to prevent autoubiquitination of WDR24, the catalytic subunit of the complex. The GATOR2 complex is required for brain myelination. This chain is GATOR2 complex protein MIOS, found in Pongo abelii (Sumatran orangutan).